The sequence spans 268 residues: Ribosomal RNA small subunit methyltransferase A (268 aa).

S-adenosyl-L-methionine contacts are provided by Asn23, Ile25, Gly50, Glu72, Asp97, and Asn116.

It belongs to the class I-like SAM-binding methyltransferase superfamily. rRNA adenine N(6)-methyltransferase family. RsmA subfamily.

The protein localises to the cytoplasm. The enzyme catalyses adenosine(1518)/adenosine(1519) in 16S rRNA + 4 S-adenosyl-L-methionine = N(6)-dimethyladenosine(1518)/N(6)-dimethyladenosine(1519) in 16S rRNA + 4 S-adenosyl-L-homocysteine + 4 H(+). Its function is as follows. Specifically dimethylates two adjacent adenosines (A1518 and A1519) in the loop of a conserved hairpin near the 3'-end of 16S rRNA in the 30S particle. May play a critical role in biogenesis of 30S subunits. This Rickettsia prowazekii (strain Madrid E) protein is Ribosomal RNA small subunit methyltransferase A.